Reading from the N-terminus, the 939-residue chain is Isoleucine--tRNA ligase (939 aa).

The 'HIGH' region motif lies at 59-69 (PYANGDIHIGH). Glu-570 contributes to the L-isoleucyl-5'-AMP binding site. Residues 611–615 (KMSKS) carry the 'KMSKS' region motif. Lys-614 lines the ATP pocket. Zn(2+) contacts are provided by Cys-902, Cys-905, Cys-922, and Cys-925.

It belongs to the class-I aminoacyl-tRNA synthetase family. IleS type 1 subfamily. Monomer. Zn(2+) serves as cofactor.

It localises to the cytoplasm. It carries out the reaction tRNA(Ile) + L-isoleucine + ATP = L-isoleucyl-tRNA(Ile) + AMP + diphosphate. In terms of biological role, catalyzes the attachment of isoleucine to tRNA(Ile). As IleRS can inadvertently accommodate and process structurally similar amino acids such as valine, to avoid such errors it has two additional distinct tRNA(Ile)-dependent editing activities. One activity is designated as 'pretransfer' editing and involves the hydrolysis of activated Val-AMP. The other activity is designated 'posttransfer' editing and involves deacylation of mischarged Val-tRNA(Ile). This chain is Isoleucine--tRNA ligase, found in Nitrosomonas europaea (strain ATCC 19718 / CIP 103999 / KCTC 2705 / NBRC 14298).